A 1087-amino-acid chain; its full sequence is Platelet-derived growth factor receptor alpha (1087 aa).

An N-terminal signal peptide occupies residues Met-1–Ala-24. Topologically, residues Glu-25–Ala-530 are extracellular. 2 Ig-like C2-type domains span residues Pro-27–Glu-114 and Ile-118–Trp-211. A disulfide bond links Cys-50 and Cys-101. Asn-77 and Asn-104 each carry an N-linked (GlcNAc...) asparagine glycan. An intrachain disulfide couples Cys-151 to Cys-192. 7 N-linked (GlcNAc...) asparagine glycosylation sites follow: Asn-216, Asn-282, Asn-309, Asn-356, Asn-362, Asn-461, and Asn-471. Ig-like C2-type domains are found at residues Ile-217–Asn-309, Lys-315–Ser-409, and Pro-417–Val-519. Cys-238 and Cys-293 are joined by a disulfide. A disulfide bridge links Cys-438 with Cys-503. Residues Ala-531–Trp-551 form a helical membrane-spanning segment. At Lys-552–Leu-1087 the chain is on the cytoplasmic side. Phosphotyrosine; by autocatalysis occurs at positions 574 and 576. Residues Leu-595 to Leu-970 enclose the Protein kinase domain. Residues Leu-601–Val-609 and Lys-629 contribute to the ATP site. Residues Tyr-722, Tyr-733, Tyr-744, Tyr-756, and Tyr-764 each carry the phosphotyrosine; by autocatalysis modification. The Proton acceptor role is filled by Asp-818. Phosphotyrosine; by autocatalysis occurs at positions 849, 988, and 1017. A disordered region spans residues Tyr-1017–Thr-1064. The span at Ser-1039–Phe-1057 shows a compositional bias: polar residues.

This sequence belongs to the protein kinase superfamily. Tyr protein kinase family. CSF-1/PDGF receptor subfamily. As to quaternary structure, interacts with homodimeric pdgfa, pdgfb and pdgfc, and with heterodimers formed by pdgfa and pdgfb. Monomer in the absence of bound ligand. Interaction with dimeric pdgfa, pdgfb and/or pdgfc leads to receptor dimerization, where both pdgfra homodimers and heterodimers with pdgfrb are observed. Ubiquitinated, leading to its internalization and degradation. In terms of processing, autophosphorylated on tyrosine residues upon ligand binding. Autophosphorylation occurs in trans, i.e. one subunit of the dimeric receptor phosphorylates tyrosine residues on the other subunit.

It is found in the cell membrane. The protein resides in the cell projection. Its subcellular location is the cilium. It localises to the golgi apparatus. It catalyses the reaction L-tyrosyl-[protein] + ATP = O-phospho-L-tyrosyl-[protein] + ADP + H(+). Its activity is regulated as follows. Present in an inactive conformation in the absence of bound ligand. Binding of pdgfa and/or pdgfb leads to dimerization and activation by autophosphorylation on tyrosine residues. Tyrosine-protein kinase that acts as a cell-surface receptor for pdgfa, pdgfb and pdgfc and plays an essential role in the regulation of embryonic development, cell proliferation, survival and chemotaxis. Depending on the context, promotes or inhibits cell proliferation and cell migration. Plays an important role in the differentiation of bone marrow-derived mesenchymal stem cells. Required for normal skeleton development. Required for normal development of the gastrointestinal tract. Plays a role in cell migration and chemotaxis in wound healing. Plays a role in platelet activation, secretion of agonists from platelet granules, and in thrombin-induced platelet aggregation. Binding of its cognate ligands - homodimeric pdgfa, homodimeric pdgfb, heterodimers formed by pdgfa and pdgfb or homodimeric pdgfc -leads to the activation of several signaling cascades; the response depends on the nature of the bound ligand and is modulated by the formation of heterodimers between pdgfra and pdgfrb. Phosphorylates pik3r1, plcg1, and ptpn11. Activation of plcg1 leads to the production of the cellular signaling molecules diacylglycerol and inositol 1,4,5-trisphosphate, mobilization of cytosolic Ca(2+) and the activation of protein kinase C. Phosphorylates pik3r1, the regulatory subunit of phosphatidylinositol 3-kinase, and thereby mediates activation of the akt1 signaling pathway. Mediates activation of hras and of the MAP kinases mapk1/erk2 and/or mapk3/erk1. Promotes activation of stat family members stat1, stat3 and stat5a and/or stat5b. Receptor signaling is down-regulated by protein phosphatases that dephosphorylate the receptor and its down-stream effectors, and by rapid internalization of the activated receptor. In Xenopus laevis (African clawed frog), this protein is Platelet-derived growth factor receptor alpha (pdgfra).